The following is a 178-amino-acid chain: Ribosome maturation factor RimM (178 aa).

The region spanning 93–170 (EGSYYYHELR…ALTADAPAGL (78 aa)) is the PRC barrel domain.

Belongs to the RimM family. In terms of assembly, binds ribosomal protein uS19.

The protein localises to the cytoplasm. In terms of biological role, an accessory protein needed during the final step in the assembly of 30S ribosomal subunit, possibly for assembly of the head region. Essential for efficient processing of 16S rRNA. May be needed both before and after RbfA during the maturation of 16S rRNA. It has affinity for free ribosomal 30S subunits but not for 70S ribosomes. The chain is Ribosome maturation factor RimM from Deinococcus geothermalis (strain DSM 11300 / CIP 105573 / AG-3a).